Reading from the N-terminus, the 114-residue chain is Iron-sulfur cluster insertion protein ErpA (114 aa).

Iron-sulfur cluster contacts are provided by Cys-42, Cys-106, and Cys-108.

It belongs to the HesB/IscA family. In terms of assembly, homodimer. Requires iron-sulfur cluster as cofactor.

Its function is as follows. Required for insertion of 4Fe-4S clusters for at least IspG. The chain is Iron-sulfur cluster insertion protein ErpA from Buchnera aphidicola subsp. Acyrthosiphon pisum (strain APS) (Acyrthosiphon pisum symbiotic bacterium).